A 73-amino-acid chain; its full sequence is UPF0435 protein lwe1727 (73 aa).

It belongs to the UPF0435 family.

This Listeria welshimeri serovar 6b (strain ATCC 35897 / DSM 20650 / CCUG 15529 / CIP 8149 / NCTC 11857 / SLCC 5334 / V8) protein is UPF0435 protein lwe1727.